We begin with the raw amino-acid sequence, 674 residues long: MDHLLQKTQIQNQTEQVMNITNPNSIYIKGRLYFKGYKKIELHCFVDTGASLCIASKFVIPEEHWINAERPIMVKIADGSSITINKVCRDIDLIIAGEIFHIPTVYQQESGIDFIIGNNFCQLYEPFIQFTDRVIFTKDRTYPVHIAKLTRAVRVGTEGFLESMKKRSKTQQPEPVNISTNKIAILSEGRRLSEEKLFITQQRMQKIEELLEKVCSENPLDPNKTKQWMKASIKLSDPSKAIKVKPMKYSPMDREEFDKQIKELLDLKVIKPSKSPHMAPAFLVNNEAEKRRGKKRMVVNYKAMNKATVGDAYNPPNKDELLTLIRGKKIFSSFDCKSGFWQVLLDQESRPLTAFTCPQGHYEWNVVPFGLKQAPSIFQRHMDEAFRVFRKFCCVYVDDILVFSNNEEDHLLHVAMILQKCNQHGIILSKKKAQLFKKKINFLGLEIDEGTHKPQGHILEHINKFPDTLEDKKQLQRFLGILTYASDYIPKLAQIRKPLQAKLKENVPWKWTKEDTLYMQKVKKNLQGFPPLHHPLPEEKLIIETDASDDYWGGMLKAIKINEGTNTELICRYASGSFKAAEKNYHSNDKETLAVINTIKKFSIYLTPVHFLIRTDNTHFKSFVNLNYKGDSKLGRNIRWQAWLSHYSFDVEHIKGTDNHFADFLSREFNRVNS.

The interval 40 to 130 (IELHCFVDTG…CQLYEPFIQF (91 aa)) is protease. Asp-47 is a catalytic residue. A Reverse transcriptase domain is found at 267–447 (LKVIKPSKSP…KKINFLGLEI (181 aa)).

This sequence belongs to the caulimoviridae enzymatic polyprotein family.

It catalyses the reaction DNA(n) + a 2'-deoxyribonucleoside 5'-triphosphate = DNA(n+1) + diphosphate. In terms of biological role, encodes for at least two polypeptides: protease (PR) and reverse transcriptase (RT). The protease processes the polyprotein in cis. Reverse transcriptase is multifunctional enzyme that converts the viral RNA genome into dsDNA in viral cytoplasmic capsids. This enzyme displays a DNA polymerase activity that can copy either DNA or RNA templates, and a ribonuclease H (RNase H) activity that cleaves the RNA strand of RNA-DNA heteroduplexes in a partially processive 3'- to 5'-endonucleasic mode. Neo-synthesized pregenomic RNA (pgRNA) are encapsidated, and reverse-transcribed inside the nucleocapsid. Partial (+)DNA is synthesized from the (-)DNA template and generates the relaxed circular DNA (RC-DNA) genome. After budding and infection, the RC-DNA migrates in the nucleus, and is converted into a plasmid-like covalently closed circular DNA (cccDNA). The polypeptide is Enzymatic polyprotein (Arabidopsis thaliana (Mouse-ear cress)).